The sequence spans 383 residues: tRNA-specific 2-thiouridylase MnmA (383 aa).

ATP contacts are provided by residues 30-37 (GMSGGVDS) and methionine 56. Residues 116–118 (NPD) form an interaction with target base in tRNA region. Cysteine 121 functions as the Nucleophile in the catalytic mechanism. The cysteines at positions 121 and 218 are disulfide-linked. Residue glycine 146 coordinates ATP. The tract at residues 168 to 170 (KDQ) is interaction with tRNA. The Cysteine persulfide intermediate role is filled by cysteine 218. The interaction with tRNA stretch occupies residues 330-331 (RY).

It belongs to the MnmA/TRMU family.

Its subcellular location is the cytoplasm. It carries out the reaction S-sulfanyl-L-cysteinyl-[protein] + uridine(34) in tRNA + AH2 + ATP = 2-thiouridine(34) in tRNA + L-cysteinyl-[protein] + A + AMP + diphosphate + H(+). Functionally, catalyzes the 2-thiolation of uridine at the wobble position (U34) of tRNA, leading to the formation of s(2)U34. The sequence is that of tRNA-specific 2-thiouridylase MnmA from Haemophilus influenzae (strain 86-028NP).